A 718-amino-acid polypeptide reads, in one-letter code: Catalase-peroxidase 1 (718 aa).

The segment at residues 93–221 is a cross-link (tryptophyl-tyrosyl-methioninium (Trp-Tyr) (with M-247)); the sequence is WHSAGTYRIA…LAAVMMGLIY (129 aa). The Proton acceptor role is filled by His94. A cross-link (tryptophyl-tyrosyl-methioninium (Tyr-Met) (with W-93)) is located at residues 221 to 247; the sequence is YVNPEGVDGNPDPLKTAQDMRVTFARM. His262 is a heme b binding site.

It belongs to the peroxidase family. Peroxidase/catalase subfamily. Homodimer or homotetramer. It depends on heme b as a cofactor. Post-translationally, formation of the three residue Trp-Tyr-Met cross-link is important for the catalase, but not the peroxidase activity of the enzyme.

It catalyses the reaction H2O2 + AH2 = A + 2 H2O. It carries out the reaction 2 H2O2 = O2 + 2 H2O. Functionally, bifunctional enzyme with both catalase and broad-spectrum peroxidase activity. The sequence is that of Catalase-peroxidase 1 from Shewanella amazonensis (strain ATCC BAA-1098 / SB2B).